The sequence spans 342 residues: Aromatic amino acid aminotransferase (342 aa).

N6-(pyridoxal phosphate)lysine is present on Lys-214.

The protein belongs to the class-II pyridoxal-phosphate-dependent aminotransferase family. Homodimer. The cofactor is pyridoxal 5'-phosphate.

The enzyme catalyses an aromatic L-alpha-amino acid + 2-oxoglutarate = an aromatic oxo-acid + L-glutamate. Functionally, aminotransferase that catalyzes the conversion of aromatic amino acids and 2-oxoglutarate into corresponding aromatic oxo acids and L-glutamate. The sequence is that of Aromatic amino acid aminotransferase from Corynebacterium efficiens (strain DSM 44549 / YS-314 / AJ 12310 / JCM 11189 / NBRC 100395).